Here is a 433-residue protein sequence, read N- to C-terminus: 26S proteasome regulatory subunit 7 (433 aa).

Positions 1 to 22 are disordered; that stretch reads MPDYLGADQRKTKEDEKDDKPI. Residues 8-22 show a composition bias toward basic and acidic residues; sequence DQRKTKEDEKDDKPI. At Lys-116 the chain carries N6-acetyllysine. 216–223 contributes to the ATP binding site; that stretch reads GPPGTGKT. Lys-422 is modified (N6-acetyllysine).

The protein belongs to the AAA ATPase family. As to quaternary structure, component of the 19S proteasome regulatory particle complex. The 26S proteasome consists of a 20S core particle (CP) and two 19S regulatory subunits (RP). The regulatory particle is made of a lid composed of 9 subunits, a base containing 6 ATPases including PSMC2 and few additional components. Interacts with NDC80 and SQSTM1. Interacts with PAAF1. Interacts with TRIM5. Post-translationally, monoubiquitinated by RNF181. Phosphorylated. Dephosphorylated by UBLCP1 which impairs PSMC2 ATPase activity and disrupts 26S proteasome assembly.

The protein resides in the cytoplasm. Component of the 26S proteasome, a multiprotein complex involved in the ATP-dependent degradation of ubiquitinated proteins. This complex plays a key role in the maintenance of protein homeostasis by removing misfolded or damaged proteins, which could impair cellular functions, and by removing proteins whose functions are no longer required. Therefore, the proteasome participates in numerous cellular processes, including cell cycle progression, apoptosis, or DNA damage repair. PSMC2 belongs to the heterohexameric ring of AAA (ATPases associated with diverse cellular activities) proteins that unfolds ubiquitinated target proteins that are concurrently translocated into a proteolytic chamber and degraded into peptides. This is 26S proteasome regulatory subunit 7 (Psmc2) from Rattus norvegicus (Rat).